Here is a 101-residue protein sequence, read N- to C-terminus: Small ribosomal subunit protein uS14 (101 aa).

The protein belongs to the universal ribosomal protein uS14 family. Part of the 30S ribosomal subunit. Contacts proteins S3 and S10.

Binds 16S rRNA, required for the assembly of 30S particles and may also be responsible for determining the conformation of the 16S rRNA at the A site. This chain is Small ribosomal subunit protein uS14, found in Shewanella putrefaciens (strain CN-32 / ATCC BAA-453).